Reading from the N-terminus, the 675-residue chain is DNA ligase (675 aa).

NAD(+) contacts are provided by residues 33–37, 82–83, and E114; these read DAEYD and SL. K116 functions as the N6-AMP-lysine intermediate in the catalytic mechanism. Residues R137, E174, K291, and K315 each coordinate NAD(+). Residues C409, C412, C427, and C433 each coordinate Zn(2+). The 81-residue stretch at 595–675 folds into the BRCT domain; it reads AGDNPFAGKT…EMIRLLDQSK (81 aa).

Belongs to the NAD-dependent DNA ligase family. LigA subfamily. Mg(2+) is required as a cofactor. The cofactor is Mn(2+).

It catalyses the reaction NAD(+) + (deoxyribonucleotide)n-3'-hydroxyl + 5'-phospho-(deoxyribonucleotide)m = (deoxyribonucleotide)n+m + AMP + beta-nicotinamide D-nucleotide.. Its function is as follows. DNA ligase that catalyzes the formation of phosphodiester linkages between 5'-phosphoryl and 3'-hydroxyl groups in double-stranded DNA using NAD as a coenzyme and as the energy source for the reaction. It is essential for DNA replication and repair of damaged DNA. This chain is DNA ligase, found in Proteus mirabilis (strain HI4320).